A 360-amino-acid chain; its full sequence is Threonine synthase (360 aa).

Lys-69 carries the post-translational modification N6-(pyridoxal phosphate)lysine. Pyridoxal 5'-phosphate contacts are provided by residues Asn-95, 196 to 200 (GNAGN), and Thr-326.

This sequence belongs to the threonine synthase family. Homodimer. The cofactor is pyridoxal 5'-phosphate.

It catalyses the reaction O-phospho-L-homoserine + H2O = L-threonine + phosphate. It functions in the pathway amino-acid biosynthesis; L-threonine biosynthesis; L-threonine from L-aspartate: step 5/5. Catalyzes the gamma-elimination of phosphate from L-phosphohomoserine and the beta-addition of water to produce L-threonine. This chain is Threonine synthase (thrC), found in Mycobacterium bovis (strain ATCC BAA-935 / AF2122/97).